A 340-amino-acid chain; its full sequence is Biotin synthase (340 aa).

The Radical SAM core domain occupies 45 to 272 (NAVQVSTLLS…ASYVRLSAGR (228 aa)). [4Fe-4S] cluster contacts are provided by Cys-60, Cys-64, and Cys-67. The [2Fe-2S] cluster site is built by Cys-104, Cys-135, Cys-195, and Arg-267.

The protein belongs to the radical SAM superfamily. Biotin synthase family. As to quaternary structure, homodimer. The cofactor is [4Fe-4S] cluster. [2Fe-2S] cluster serves as cofactor.

It catalyses the reaction (4R,5S)-dethiobiotin + (sulfur carrier)-SH + 2 reduced [2Fe-2S]-[ferredoxin] + 2 S-adenosyl-L-methionine = (sulfur carrier)-H + biotin + 2 5'-deoxyadenosine + 2 L-methionine + 2 oxidized [2Fe-2S]-[ferredoxin]. The protein operates within cofactor biosynthesis; biotin biosynthesis; biotin from 7,8-diaminononanoate: step 2/2. Catalyzes the conversion of dethiobiotin (DTB) to biotin by the insertion of a sulfur atom into dethiobiotin via a radical-based mechanism. The polypeptide is Biotin synthase (Thioalkalivibrio sulfidiphilus (strain HL-EbGR7)).